The chain runs to 1052 residues: MAAAYLDPNLNHTPSSSTKTHLGTGMERSPGAMERVLKVFHYFESSSEPTTWASIIRHGDATDVRGIIQKIVDSHKVKHVACYGFRLSHLRSEEVHWLHVDMGVSSVREKYELAHPPEEWKYELRIRYLPKGFLNQFTEDKPTLNFFYQQVKSDYMQEIADQVDQEIALKLGCLEIRRSYWEMRGNALEKKSNYEVLEKDVGLKRFFPKSLLDSVKAKTLRKLIQQTFRQFANLNREESILKFFEILSPVYRFDKECFKCALGSSWIISVELAIGPEEGISYLTDKGCNPTHLADFNQVQTIQYSNSEDKDRKGMLQLKIAGAPEPLTVTAPSLTIAENMADLIDGYCRLVNGATQSFIIRPQKEGERALPSIPKLANSEKQGMRTHAVSVSETDDYAEIIDEEDTYTMPSTRDYEIQRERIELGRCIGEGQFGDVHQGVYLSPENPALAVAIKTCKNCTSDSVREKFLQEALTMRQFDHPHIVKLIGVITENPVWIIMELCTLGELRSFLQVRKYSLDLASLILYAYQLSTALAYLESKRFVHRDIAARNVLVSSNDCVKLGDFGLSRYMEDSTYYKASKGKLPIKWMAPESINFRRFTSASDVWMFGVCMWEILMHGVKPFQGVKNNDVIGRIENGERLPMPPNCPPTLYSLMTKCWAYDPSRRPRFTELKAQLSTILEEEKVQQEERMRMESRRQATVSWDSGGSDEAPPKPSRPGYPSPRSSEGFYPSPQHMVQTNHYQVSGYPGSHGIPAMAGSIYQGQASLLDQTELWNHRPQEMSMWQPSVEDSAALDLRGMGQVLPPHLMEERLIRQQQEMEEDQRWLEKEERFLKPDVRLSRGSIDREDGSFQGPTGNQHIYQPVGKPDPAAPPKKPPRPGAPGHLSNLSSISSPADSYNEGVKLQPQEISPPPTANLDRSNDKVYENVTGLVKAVIEMSSKIQPAPPEEYVPMVKEVGLALRTLLATVDETIPALPASTHREIEMAQKLLNSDLGELISKMKLAQQYVMTSLQQEYKKQMLTAAHALAVDAKNLLDVIDQARLKMLGQTRPH.

A disordered region spans residues 1 to 27 (MAAAYLDPNLNHTPSSSTKTHLGTGME). Residue Ala-2 is modified to N-acetylalanine. Tyr-5 is subject to Phosphotyrosine. A compositionally biased stretch (polar residues) spans 10–21 (LNHTPSSSTKTH). Residue Thr-13 is modified to Phosphothreonine. A phosphoserine mark is found at Ser-29 and Ser-54. One can recognise an FERM domain in the interval 35 to 355 (RVLKVFHYFE…GYCRLVNGAT (321 aa)). Lys-152 participates in a covalent cross-link: Glycyl lysine isopeptide (Lys-Gly) (interchain with G-Cter in SUMO). 2 positions are modified to phosphotyrosine: Tyr-397 and Tyr-407. Tyr-397 bears the Phosphotyrosine; by autocatalysis mark. ATP is bound by residues 428 to 434 (IGEGQFG), Lys-454, and 500 to 502 (ELC). In terms of domain architecture, Protein kinase spans 431–680 (GQFGDVHQGV…ELKAQLSTIL (250 aa)). Asp-546 acts as the Proton acceptor in catalysis. Position 570 is a phosphotyrosine (Tyr-570). Phosphotyrosine; by RET and SRC occurs at positions 576 and 577. Ser-580 carries the post-translational modification Phosphoserine. Over residues 685–697 (VQQEERMRMESRR) the composition is skewed to basic and acidic residues. 2 disordered regions span residues 685–734 (VQQE…PSPQ) and 837–921 (VRLS…DRSN). Positions 707–1052 (GSDEAPPKPS…LKMLGQTRPH (346 aa)) are interaction with TGFB1I1. Ser-722 carries the phosphoserine modification. The residue at position 732 (Ser-732) is a Phosphoserine; by CDK5. A compositionally biased stretch (basic and acidic residues) spans 837-849 (VRLSRGSIDREDG). Position 843 is a phosphoserine (Ser-843). At Tyr-861 the chain carries Phosphotyrosine. Pro residues predominate over residues 869 to 880 (PAAPPKKPPRPG). A compositionally biased stretch (polar residues) spans 886–896 (SNLSSISSPAD). At Ser-910 the chain carries Phosphoserine. The tract at residues 912–1052 (PPTANLDRSN…LKMLGQTRPH (141 aa)) is interaction with ARHGEF28. Thr-914 carries the post-translational modification Phosphothreonine. Tyr-925 carries the post-translational modification Phosphotyrosine; by SRC.

It belongs to the protein kinase superfamily. Tyr protein kinase family. FAK subfamily. Interacts with GIT1. Component of a complex that contains at least FER, CTTN and PTK2/FAK1. Interacts with BMX. Interacts with STEAP4. Interacts with ZFYVE21. Interacts with ESR1. Interacts with FGR, FLT4 and RET. Interacts with EPHA2 in resting cells; activation of EPHA2 recruits PTPN11, leading to dephosphorylation of PTK2/FAK1 and dissociation of the complex. Interacts with EPHA1 (kinase activity-dependent). Interacts with MISP. Interacts with PIAS1. Interacts with ARHGAP26 and SHC1. Interacts with RB1CC1; this inhibits PTK2/FAK1 activity and activation of downstream signaling pathways. Interacts with P53/TP53. Interacts with STAT1. Interacts with WASL. Interacts with ARHGEF7. Interacts with DCC. Interacts (via first Pro-rich region) with CAS family members (via SH3 domain), including BCAR1, BCAR3 and CASS4. Interacts with NEDD9 (via C-terminus). Interacts with SORBS1. Interacts with ARHGEF28. Interacts with SHB. Part of a complex composed of THSD1, PTK2/FAK1, TLN1 and VCL. Interacts with PXN and TLN1. Interacts with TGFB1I1. Interacts with PIK3R1 or PIK3R2. Interacts with SRC, GRB2 and GRB7. Interacts with LPXN (via LD motif 3). Interacts with CD36. Interacts with EMP2; regulates PTK2 activation and localization. Interacts with DSCAM. Interacts with AMBRA1. Interacts (when tyrosine-phosphorylated) with tensin TNS1; the interaction is increased by phosphorylation of TNS1. Phosphorylated on tyrosine residues upon activation, e.g. upon integrin signaling. Tyr-397 is the major autophosphorylation site, but other kinases can also phosphorylate this residue. Phosphorylation at Tyr-397 promotes interaction with SRC and SRC family members, leading to phosphorylation at Tyr-576, Tyr-577 and at additional tyrosine residues. FGR promotes phosphorylation at Tyr-397 and Tyr-576. FER promotes phosphorylation at Tyr-577, Tyr-861 and Tyr-925, even when cells are not adherent. Tyr-397, Tyr-576 and Ser-722 are phosphorylated only when cells are adherent. Phosphorylation at Tyr-397 is important for interaction with BMX, PIK3R1 and SHC1. Phosphorylation at Tyr-925 is important for interaction with GRB2. Dephosphorylated by PTPN11; PTPN11 is recruited to PTK2 via EPHA2 (tyrosine phosphorylated). Microtubule-induced dephosphorylation at Tyr-397 is crucial for the induction of focal adhesion disassembly; this dephosphorylation could be catalyzed by PTPN11 and regulated by ZFYVE21. Phosphorylation on tyrosine residues is enhanced by NTN1. In terms of processing, sumoylated; this enhances autophosphorylation.

Its subcellular location is the cell junction. It localises to the focal adhesion. The protein resides in the cell membrane. It is found in the cytoplasm. The protein localises to the perinuclear region. Its subcellular location is the cell cortex. It localises to the cytoskeleton. The protein resides in the microtubule organizing center. It is found in the centrosome. The protein localises to the nucleus. Its subcellular location is the cilium basal body. The enzyme catalyses L-tyrosyl-[protein] + ATP = O-phospho-L-tyrosyl-[protein] + ADP + H(+). Its activity is regulated as follows. Subject to autoinhibition, mediated by interactions between the FERM domain and the kinase domain. Activated by autophosphorylation at Tyr-397. This promotes interaction with SRC and phosphorylation at Tyr-576 and Tyr-577 in the kinase activation loop by SRC. Phosphorylation at Tyr-397, Tyr-576 and Tyr-577 is required for maximal kinase activity. In terms of biological role, non-receptor protein-tyrosine kinase that plays an essential role in regulating cell migration, adhesion, spreading, reorganization of the actin cytoskeleton, formation and disassembly of focal adhesions and cell protrusions, cell cycle progression, cell proliferation and apoptosis. Required for early embryonic development and placenta development. Required for embryonic angiogenesis, normal cardiomyocyte migration and proliferation, and normal heart development. Regulates axon growth and neuronal cell migration, axon branching and synapse formation; required for normal development of the nervous system. Plays a role in osteogenesis and differentiation of osteoblasts. Functions in integrin signal transduction, but also in signaling downstream of numerous growth factor receptors, G-protein coupled receptors (GPCR), EPHA2, netrin receptors and LDL receptors. Forms multisubunit signaling complexes with SRC and SRC family members upon activation; this leads to the phosphorylation of additional tyrosine residues, creating binding sites for scaffold proteins, effectors and substrates. Regulates numerous signaling pathways. Promotes activation of phosphatidylinositol 3-kinase and the AKT1 signaling cascade. Promotes activation of MAPK1/ERK2, MAPK3/ERK1 and the MAP kinase signaling cascade. Promotes localized and transient activation of guanine nucleotide exchange factors (GEFs) and GTPase-activating proteins (GAPs), and thereby modulates the activity of Rho family GTPases. Signaling via CAS family members mediates activation of RAC1. Phosphorylates NEDD9 following integrin stimulation. Recruits the ubiquitin ligase MDM2 to P53/TP53 in the nucleus, and thereby regulates P53/TP53 activity, P53/TP53 ubiquitination and proteasomal degradation. Phosphorylates SRC; this increases SRC kinase activity. Phosphorylates ACTN1, ARHGEF7, GRB7, RET and WASL. Promotes phosphorylation of PXN and STAT1; most likely PXN and STAT1 are phosphorylated by a SRC family kinase that is recruited to autophosphorylated PTK2/FAK1, rather than by PTK2/FAK1 itself. Promotes phosphorylation of BCAR1; GIT2 and SHC1; this requires both SRC and PTK2/FAK1. Promotes phosphorylation of BMX and PIK3R1. Functionally, does not contain a kinase domain and inhibits PTK2/FAK1 phosphorylation and signaling. Its enhanced expression can attenuate the nuclear accumulation of LPXN and limit its ability to enhance serum response factor (SRF)-dependent gene transcription. This chain is Focal adhesion kinase 1, found in Mus musculus (Mouse).